A 404-amino-acid chain; its full sequence is 5-aminolevulinate synthase (404 aa).

2 residues coordinate substrate: arginine 21 and serine 136. 3 residues coordinate pyridoxal 5'-phosphate: serine 188, histidine 216, and threonine 244. Lysine 247 is an active-site residue. An N6-(pyridoxal phosphate)lysine modification is found at lysine 247. The pyridoxal 5'-phosphate site is built by threonine 276 and threonine 277. Residue threonine 362 participates in substrate binding.

Belongs to the class-II pyridoxal-phosphate-dependent aminotransferase family. In terms of assembly, homodimer. It depends on pyridoxal 5'-phosphate as a cofactor.

The catalysed reaction is succinyl-CoA + glycine + H(+) = 5-aminolevulinate + CO2 + CoA. The protein operates within porphyrin-containing compound metabolism; protoporphyrin-IX biosynthesis; 5-aminolevulinate from glycine: step 1/1. This chain is 5-aminolevulinate synthase (hemA), found in Rhizobium meliloti (strain 1021) (Ensifer meliloti).